Reading from the N-terminus, the 264-residue chain is MVWLPRVPCVAAVILLLTVLSPPVALVRNSRPRFLEYSTSECHFYNGTQRVRFLERYIYNREEYVRFDSDVGEYRAVTELGRPDAEYWNSQPEILEDARATVDTYCRHNYEIFDNFLVPRRVEPTVTVYPTKTQPLEHHNLLVCSVSDFYPGNIEVRWFRNGKEEKTGIVSTGLVRNGDWTFQTLVMLETVPQSGEVYTCQVEHPSLTDPVTVEWKAQSTSAQNKMLSGVGGFVLGLLFLGAGLFIYFRNQKGQSGLQPTGLLS.

Residues 1–31 form the signal peptide; that stretch reads MVWLPRVPCVAAVILLLTVLSPPVALVRNSR. A beta-1 region spans residues 32–121; sequence PRFLEYSTSE…IFDNFLVPRR (90 aa). Residues 32-225 lie on the Extracellular side of the membrane; sequence PRFLEYSTSE…KAQSTSAQNK (194 aa). Intrachain disulfides connect C42/C106 and C144/C200. N46 carries N-linked (GlcNAc...) asparagine glycosylation. A beta-2 region spans residues 122–215; that stretch reads VEPTVTVYPT…SLTDPVTVEW (94 aa). Residues 124–214 enclose the Ig-like C1-type domain; it reads PTVTVYPTKT…PSLTDPVTVE (91 aa). Positions 216–225 are connecting peptide; that stretch reads KAQSTSAQNK. The helical transmembrane segment at 226–248 threads the bilayer; sequence MLSGVGGFVLGLLFLGAGLFIYF. Residues 249–264 are Cytoplasmic-facing; sequence RNQKGQSGLQPTGLLS.

Belongs to the MHC class II family. Post-translationally, ubiquitinated in immature dendritic cells leading to down-regulation of MHC class II.

Its subcellular location is the membrane. The protein is H-2 class II histocompatibility antigen, I-E beta chain (H2-Eb1) of Mus musculus (Mouse).